The chain runs to 242 residues: Protein GrpE (242 aa).

2 disordered regions span residues 1–75 and 93–136; these read MSDD…DDEL and VADL…QQIK. The span at 23 to 37 shows a compositional bias: low complexity; the sequence is DAESSAAEDASAADD. The span at 38 to 49 shows a compositional bias: acidic residues; sequence AAPEESTGDEQA. Polar residues predominate over residues 50-64; sequence GETTAESSDAESVTV. Over residues 96-108 the composition is skewed to acidic residues; it reads LETERDEAEETAS. Positions 124–133 are enriched in basic residues; sequence YKKRAKKRQQ.

This sequence belongs to the GrpE family. As to quaternary structure, homodimer.

Its subcellular location is the cytoplasm. Participates actively in the response to hyperosmotic and heat shock by preventing the aggregation of stress-denatured proteins, in association with DnaK and GrpE. It is the nucleotide exchange factor for DnaK and may function as a thermosensor. Unfolded proteins bind initially to DnaJ; upon interaction with the DnaJ-bound protein, DnaK hydrolyzes its bound ATP, resulting in the formation of a stable complex. GrpE releases ADP from DnaK; ATP binding to DnaK triggers the release of the substrate protein, thus completing the reaction cycle. Several rounds of ATP-dependent interactions between DnaJ, DnaK and GrpE are required for fully efficient folding. The protein is Protein GrpE of Haloferax mediterranei (strain ATCC 33500 / DSM 1411 / JCM 8866 / NBRC 14739 / NCIMB 2177 / R-4) (Halobacterium mediterranei).